A 657-amino-acid polypeptide reads, in one-letter code: Probable cobalt/nickel-exporting P-type ATPase (657 aa).

5 helical membrane-spanning segments follow: residues 40–60, 62–82, 101–121, 268–288, and 299–319; these read WATV…NGAP, AMWW…SAWA, AAVG…IVIF, LGMV…GADL, and MIVA…LSAI. Asp-347 acts as the 4-aspartylphosphate intermediate in catalysis. Mg(2+)-binding residues include Asp-543 and Asp-547. The chain crosses the membrane as a helical span at residues 596-618; sequence VVTVNLAIAATFIAVLVLWDLFG.

The protein belongs to the cation transport ATPase (P-type) (TC 3.A.3) family. Type IB subfamily.

The protein localises to the cell membrane. Functionally, involved in heavy metal homeostasis. Probably exports nickel and cobalt ions out of the cell. This Mycobacterium bovis (strain ATCC BAA-935 / AF2122/97) protein is Probable cobalt/nickel-exporting P-type ATPase (ctpD).